The following is a 208-amino-acid chain: Uracil phosphoribosyltransferase (208 aa).

5-phospho-alpha-D-ribose 1-diphosphate contacts are provided by residues R78, R103, and 130–138 (DPMLATGGS). Uracil is bound by residues I193 and 198-200 (GDA). 5-phospho-alpha-D-ribose 1-diphosphate is bound at residue D199.

Belongs to the UPRTase family. Mg(2+) serves as cofactor.

The catalysed reaction is UMP + diphosphate = 5-phospho-alpha-D-ribose 1-diphosphate + uracil. Its pathway is pyrimidine metabolism; UMP biosynthesis via salvage pathway; UMP from uracil: step 1/1. Allosterically activated by GTP. Catalyzes the conversion of uracil and 5-phospho-alpha-D-ribose 1-diphosphate (PRPP) to UMP and diphosphate. This is Uracil phosphoribosyltransferase from Roseiflexus castenholzii (strain DSM 13941 / HLO8).